We begin with the raw amino-acid sequence, 905 residues long: MSQNGAVATNGVMLEELSSWPEEICRRELPSVLPRLLSMYQCSESWIEHIRILKIIVEMFLPHMNHLTLEETLFSQILPKTIQLFDGMICELTSEARELSSQNLEIQITIRNILQTMVQIIGSLTGCVHHVCATQESIILGNIHSLPSFILHIIKSTFVHCKNSESVYSGRLHLVSDLLQTLFKEAYSLQKQLMELLDMVCLGPSEDENSILTMVEVIHSLMDICSVISSMDKAFHANTWKFIIKQSLKHQSVIRSQLKHKEIISSLCEDILFSFHSCLQLAEQTTEPAAQDNADYRLFQKTLKLCRFFANSLLHYTKEFLPFLPDSCRTLHQLYLQIYSKFPPCLYTAKISKVQQEEIAGTFLVVLDPLLSQLLKSQSFVQTVLASKLDLPHELQLPQVLLLVVVVDKLPSQPEDVQTLWCTEDMTRMSILKAIFYNFGQFSGELSLPAHLQGVKGKGQAEVPVTLYQRICVHLCTFVASLHPTLFPELDAALLNAVLSTNMSTSLLAMDVWCFLARYGTAELGAHHVTLVAHLIKSCPGRCVQLTNLSVLLRRLFFFMAPAHQVEFIQKFSPREADNLHLWQYISFQALPADLRKQVTCEVTGVCTAQCRKWLSGSHTLAELDSLNTALSVLLTVCNSAGEALDSRQLTAVTEVVGQLWAFINVEQIISQPHVQQAFSLLLQLLAFFIQTVDLQLISQVVNVLTLVIKLEPPDHVSLAVLDFLSSLGKLYISQTLRDKVLPSLSCIVASLMVNRNWLLEQHTLEAFTQFAEGTKHEEIVSQCLGSEEIKNKVVSFLEKTESVGETEAATADNSGEQKTDTFWEPVAKVTLEEAKGSAFQPCTKRARQELLLEEEYRSAFQTATRALETTEALLKHSRAPAWLLSELGALQERIEKLKCCVLRG.

A phosphoserine mark is found at Ser-101 and Ser-796. Lys-845 carries the N6-acetyllysine modification.

In terms of assembly, interacts (via its N-terminal region) with PLK1; controls PLK1 kinase activity. Interacts (via the KVVXF motif) with PPP1CC; controls PLK1 kinase activity. Interacts with FIGNL1; may regulate homologous recombination. Post-translationally, phosphorylation at Ser-101 by PLK1 strengthens FIRRM-PLK1 interaction. Phosphorylation at Ser-796 by PLK1 negatively regulates its interaction with PPP1CC.

The protein localises to the chromosome. It is found in the centromere. Its subcellular location is the kinetochore. It localises to the nucleus. The protein resides in the midbody. The protein localises to the cytoplasm. It is found in the cytoskeleton. Its subcellular location is the spindle. Its function is as follows. Regulates PLK1 kinase activity at kinetochores and promotes faithful chromosome segregation in prometaphase by bridging kinase and phosphatase activities. Phosphorylation of FIRRM by PLK1 negatively regulates its interaction with the phosphatase, PPP1CC, thus creating a negative feedback loop for maintaining proper PLK1 kinase activity during mitosis. In complex with FIGL1 may regulate homologous recombination. This Rattus norvegicus (Rat) protein is FIGNL1-interacting regulator of recombination and mitosis.